Here is a 98-residue protein sequence, read N- to C-terminus: NADH-ubiquinone oxidoreductase chain 4L (98 aa).

3 helical membrane-spanning segments follow: residues 1–21 (MSMVYINIFLAFTLSFMGLLI), 30–50 (LLCLEGMMLSLFVMMTVTILT), and 61–81 (IILLVFAACEAALGLSLLVMI).

This sequence belongs to the complex I subunit 4L family. In terms of assembly, core subunit of respiratory chain NADH dehydrogenase (Complex I) which is composed of 45 different subunits.

Its subcellular location is the mitochondrion inner membrane. It carries out the reaction a ubiquinone + NADH + 5 H(+)(in) = a ubiquinol + NAD(+) + 4 H(+)(out). In terms of biological role, core subunit of the mitochondrial membrane respiratory chain NADH dehydrogenase (Complex I) which catalyzes electron transfer from NADH through the respiratory chain, using ubiquinone as an electron acceptor. Part of the enzyme membrane arm which is embedded in the lipid bilayer and involved in proton translocation. This is NADH-ubiquinone oxidoreductase chain 4L (MT-ND4L) from Gulo gulo (Wolverine).